Reading from the N-terminus, the 116-residue chain is Large ribosomal subunit protein bL17 (116 aa).

Belongs to the bacterial ribosomal protein bL17 family. As to quaternary structure, part of the 50S ribosomal subunit. Contacts protein L32.

In Parasynechococcus marenigrum (strain WH8102), this protein is Large ribosomal subunit protein bL17.